A 368-amino-acid chain; its full sequence is DnaJ homolog subfamily C member 25 (368 aa).

A helical transmembrane segment spans residues 25–47 (MQPRLFVLVALSVLLLSGRAGAL). One can recognise a J domain in the interval 57-132 (VCYDVLGVSR…ETRKDYDYML (76 aa)). 2 helical membrane-spanning segments follow: residues 158–178 (IVILVSVCAISIFQYYSWWSS) and 252–272 (ILLFQIILFPYYIFKYISWYV).

Belongs to the DNAJC25 family.

Its subcellular location is the membrane. The polypeptide is DnaJ homolog subfamily C member 25 (dnajc25) (Xenopus tropicalis (Western clawed frog)).